The sequence spans 149 residues: Large ribosomal subunit protein bL9 (149 aa).

The protein belongs to the bacterial ribosomal protein bL9 family.

In terms of biological role, binds to the 23S rRNA. The chain is Large ribosomal subunit protein bL9 from Bacillus velezensis (strain DSM 23117 / BGSC 10A6 / LMG 26770 / FZB42) (Bacillus amyloliquefaciens subsp. plantarum).